Reading from the N-terminus, the 105-residue chain is Large ribosomal subunit protein uL24 (105 aa).

It belongs to the universal ribosomal protein uL24 family. In terms of assembly, part of the 50S ribosomal subunit.

In terms of biological role, one of two assembly initiator proteins, it binds directly to the 5'-end of the 23S rRNA, where it nucleates assembly of the 50S subunit. Its function is as follows. One of the proteins that surrounds the polypeptide exit tunnel on the outside of the subunit. The protein is Large ribosomal subunit protein uL24 of Aeromonas salmonicida (strain A449).